A 547-amino-acid polypeptide reads, in one-letter code: Cytochrome P450 78A1 (547 aa).

The span at 84–94 (ASSRCPGAAAP) shows a compositional bias: low complexity. A disordered region spans residues 84-104 (ASSRCPGAAAPRPRRDGPRRR). Cys-490 is a binding site for heme.

It belongs to the cytochrome P450 family. It depends on heme as a cofactor. Shoot apex.

The polypeptide is Cytochrome P450 78A1 (CYP78A1) (Zea mays (Maize)).